A 340-amino-acid chain; its full sequence is Glyceraldehyde-3-phosphate dehydrogenase (340 aa).

Residues 12 to 13 (RI), aspartate 40, lysine 85, and serine 128 contribute to the NAD(+) site. Residues 158 to 160 (SCT), threonine 189, arginine 204, 217 to 218 (TG), and arginine 240 each bind D-glyceraldehyde 3-phosphate. Cysteine 159 serves as the catalytic Nucleophile. Residue lysine 257 forms an Isoglutamyl lysine isopeptide (Lys-Gln) (interchain with Q-Cter in protein Pup) linkage. Asparagine 321 is a binding site for NAD(+).

Belongs to the glyceraldehyde-3-phosphate dehydrogenase family. In terms of assembly, homotetramer.

The protein resides in the cytoplasm. The catalysed reaction is D-glyceraldehyde 3-phosphate + phosphate + NAD(+) = (2R)-3-phospho-glyceroyl phosphate + NADH + H(+). Its pathway is carbohydrate degradation; glycolysis; pyruvate from D-glyceraldehyde 3-phosphate: step 1/5. In terms of biological role, catalyzes the oxidative phosphorylation of glyceraldehyde 3-phosphate (G3P) to 1,3-bisphosphoglycerate (BPG) using the cofactor NAD. The first reaction step involves the formation of a hemiacetal intermediate between G3P and a cysteine residue, and this hemiacetal intermediate is then oxidized to a thioester, with concomitant reduction of NAD to NADH. The reduced NADH is then exchanged with the second NAD, and the thioester is attacked by a nucleophilic inorganic phosphate to produce BPG. The protein is Glyceraldehyde-3-phosphate dehydrogenase (gapA) of Mycolicibacterium smegmatis (strain ATCC 700084 / mc(2)155) (Mycobacterium smegmatis).